Reading from the N-terminus, the 363-residue chain is Phospho-N-acetylmuramoyl-pentapeptide-transferase (363 aa).

10 helical membrane-spanning segments follow: residues 33 to 53 (YAVL…GVLP), 82 to 102 (GVIF…PSFV), 105 to 125 (LILL…CAQV), 133 to 153 (GALD…FYFH), 166 to 186 (PVFV…WMSI), 198 to 218 (LSGA…YFLL), 227 to 247 (LLVP…ALAG), 271 to 291 (ALGF…LLLM), 295 to 315 (VILV…FFHV), and 340 to 360 (VLLR…GVLF).

This sequence belongs to the glycosyltransferase 4 family. MraY subfamily. The cofactor is Mg(2+).

The protein resides in the cell inner membrane. The catalysed reaction is UDP-N-acetyl-alpha-D-muramoyl-L-alanyl-gamma-D-glutamyl-meso-2,6-diaminopimeloyl-D-alanyl-D-alanine + di-trans,octa-cis-undecaprenyl phosphate = di-trans,octa-cis-undecaprenyl diphospho-N-acetyl-alpha-D-muramoyl-L-alanyl-D-glutamyl-meso-2,6-diaminopimeloyl-D-alanyl-D-alanine + UMP. Its pathway is cell wall biogenesis; peptidoglycan biosynthesis. Catalyzes the initial step of the lipid cycle reactions in the biosynthesis of the cell wall peptidoglycan: transfers peptidoglycan precursor phospho-MurNAc-pentapeptide from UDP-MurNAc-pentapeptide onto the lipid carrier undecaprenyl phosphate, yielding undecaprenyl-pyrophosphoryl-MurNAc-pentapeptide, known as lipid I. This chain is Phospho-N-acetylmuramoyl-pentapeptide-transferase, found in Treponema pallidum (strain Nichols).